The primary structure comprises 38 residues: Large ribosomal subunit protein bL36A (38 aa).

Belongs to the bacterial ribosomal protein bL36 family.

The sequence is that of Large ribosomal subunit protein bL36A from Pectobacterium atrosepticum (strain SCRI 1043 / ATCC BAA-672) (Erwinia carotovora subsp. atroseptica).